The primary structure comprises 202 residues: Glycerol-3-phosphate acyltransferase (202 aa).

Transmembrane regions (helical) follow at residues 3 to 23 (NLII…LILA), 61 to 81 (IATI…LKFL), 87 to 107 (LLWS…YLLF), 118 to 138 (GAMI…WVVI), 144 to 164 (ISSL…FIFN), and 167 to 187 (LEIH…YKHL).

This sequence belongs to the PlsY family. Probably interacts with PlsX.

The protein localises to the cell inner membrane. The enzyme catalyses an acyl phosphate + sn-glycerol 3-phosphate = a 1-acyl-sn-glycero-3-phosphate + phosphate. It participates in lipid metabolism; phospholipid metabolism. Catalyzes the transfer of an acyl group from acyl-phosphate (acyl-PO(4)) to glycerol-3-phosphate (G3P) to form lysophosphatidic acid (LPA). This enzyme utilizes acyl-phosphate as fatty acyl donor, but not acyl-CoA or acyl-ACP. The sequence is that of Glycerol-3-phosphate acyltransferase from Campylobacter jejuni subsp. jejuni serotype O:23/36 (strain 81-176).